We begin with the raw amino-acid sequence, 97 residues long: Large ribosomal subunit protein uL23 (97 aa).

This sequence belongs to the universal ribosomal protein uL23 family. As to quaternary structure, part of the 50S ribosomal subunit. Contacts protein L29, and trigger factor when it is bound to the ribosome.

Functionally, one of the early assembly proteins it binds 23S rRNA. One of the proteins that surrounds the polypeptide exit tunnel on the outside of the ribosome. Forms the main docking site for trigger factor binding to the ribosome. This is Large ribosomal subunit protein uL23 from Allorhizobium ampelinum (strain ATCC BAA-846 / DSM 112012 / S4) (Agrobacterium vitis (strain S4)).